The primary structure comprises 170 residues: Large ribosomal subunit protein uL11 (170 aa).

This sequence belongs to the universal ribosomal protein uL11 family. In terms of assembly, part of the ribosomal stalk of the 50S ribosomal subunit. Interacts with L10 and the large rRNA to form the base of the stalk. L10 forms an elongated spine to which L12 dimers bind in a sequential fashion forming a multimeric L10(L12)X complex.

Its function is as follows. Forms part of the ribosomal stalk which helps the ribosome interact with GTP-bound translation factors. The polypeptide is Large ribosomal subunit protein uL11 (Saccharolobus islandicus (strain Y.N.15.51 / Yellowstone #2) (Sulfolobus islandicus)).